Consider the following 205-residue polypeptide: Molybdenum cofactor guanylyltransferase (205 aa).

GTP-binding positions include 14 to 16, lysine 27, aspartate 77, and aspartate 107; that span reads LAG. Residue aspartate 107 coordinates Mg(2+).

This sequence belongs to the MobA family. As to quaternary structure, monomer. Mg(2+) serves as cofactor.

Its subcellular location is the cytoplasm. The enzyme catalyses Mo-molybdopterin + GTP + H(+) = Mo-molybdopterin guanine dinucleotide + diphosphate. Functionally, transfers a GMP moiety from GTP to Mo-molybdopterin (Mo-MPT) cofactor (Moco or molybdenum cofactor) to form Mo-molybdopterin guanine dinucleotide (Mo-MGD) cofactor. The sequence is that of Molybdenum cofactor guanylyltransferase from Burkholderia lata (strain ATCC 17760 / DSM 23089 / LMG 22485 / NCIMB 9086 / R18194 / 383).